The primary structure comprises 104 residues: NADH-quinone oxidoreductase subunit K (104 aa).

3 helical membrane passes run V4–A24, V31–F51, and L67–L87.

This sequence belongs to the complex I subunit 4L family. In terms of assembly, NDH-1 is composed of 14 different subunits. Subunits NuoA, H, J, K, L, M, N constitute the membrane sector of the complex.

It is found in the cell membrane. The enzyme catalyses a quinone + NADH + 5 H(+)(in) = a quinol + NAD(+) + 4 H(+)(out). NDH-1 shuttles electrons from NADH, via FMN and iron-sulfur (Fe-S) centers, to quinones in the respiratory chain. The immediate electron acceptor for the enzyme in this species is believed to be a menaquinone. Couples the redox reaction to proton translocation (for every two electrons transferred, four hydrogen ions are translocated across the cytoplasmic membrane), and thus conserves the redox energy in a proton gradient. This is NADH-quinone oxidoreductase subunit K from Bacillus cereus (strain AH187).